We begin with the raw amino-acid sequence, 258 residues long: Tryptophan synthase alpha chain (258 aa).

Catalysis depends on proton acceptor residues Glu50 and Asp61.

Belongs to the TrpA family. As to quaternary structure, tetramer of two alpha and two beta chains.

It carries out the reaction (1S,2R)-1-C-(indol-3-yl)glycerol 3-phosphate + L-serine = D-glyceraldehyde 3-phosphate + L-tryptophan + H2O. It participates in amino-acid biosynthesis; L-tryptophan biosynthesis; L-tryptophan from chorismate: step 5/5. Its function is as follows. The alpha subunit is responsible for the aldol cleavage of indoleglycerol phosphate to indole and glyceraldehyde 3-phosphate. This Clostridium beijerinckii (strain ATCC 51743 / NCIMB 8052) (Clostridium acetobutylicum) protein is Tryptophan synthase alpha chain.